The following is a 536-amino-acid chain: Metal transporter Nramp2 (536 aa).

The tract at residues 1–37 (MSSPSGGEDSKDDEKDEESNRLLPLSSSSQSQSLQSE) is disordered. Positions 22–36 (LLPLSSSSQSQSLQS) are enriched in low complexity. N-linked (GlcNAc...) asparagine glycosylation is present at N38. 12 consecutive transmembrane segments (helical) span residues 76–96 (LWLF…PGNL), 104–124 (AIAG…GLLI), 161–181 (VALI…IQIL), 185–205 (FLPL…FLFL), 213–233 (LEGV…WMCG), 259–279 (AVGV…SALV), 305–325 (VALF…AKGF), 347–367 (YGGG…AAGQ), 400–420 (SFAI…EASL), 435–455 (IPFA…MGVF), 465–485 (AWTI…DFFI), and 492–512 (LFGF…IYLV).

It belongs to the NRAMP (TC 2.A.55) family.

The protein resides in the membrane. Functionally, probable divalent metal transporter. This is Metal transporter Nramp2 from Populus trichocarpa (Western balsam poplar).